A 397-amino-acid chain; its full sequence is Probable tRNA sulfurtransferase (397 aa).

The THUMP domain occupies 60–165 (HPVIEKLQEV…KEGTYITAYD (106 aa)). ATP contacts are provided by residues 183-184 (ML), 208-209 (HF), arginine 265, glycine 287, and glutamine 296.

Belongs to the ThiI family.

Its subcellular location is the cytoplasm. The enzyme catalyses [ThiI sulfur-carrier protein]-S-sulfanyl-L-cysteine + a uridine in tRNA + 2 reduced [2Fe-2S]-[ferredoxin] + ATP + H(+) = [ThiI sulfur-carrier protein]-L-cysteine + a 4-thiouridine in tRNA + 2 oxidized [2Fe-2S]-[ferredoxin] + AMP + diphosphate. It catalyses the reaction [ThiS sulfur-carrier protein]-C-terminal Gly-Gly-AMP + S-sulfanyl-L-cysteinyl-[cysteine desulfurase] + AH2 = [ThiS sulfur-carrier protein]-C-terminal-Gly-aminoethanethioate + L-cysteinyl-[cysteine desulfurase] + A + AMP + 2 H(+). It participates in cofactor biosynthesis; thiamine diphosphate biosynthesis. Functionally, catalyzes the ATP-dependent transfer of a sulfur to tRNA to produce 4-thiouridine in position 8 of tRNAs, which functions as a near-UV photosensor. Also catalyzes the transfer of sulfur to the sulfur carrier protein ThiS, forming ThiS-thiocarboxylate. This is a step in the synthesis of thiazole, in the thiamine biosynthesis pathway. The sulfur is donated as persulfide by IscS. In Anoxybacillus flavithermus (strain DSM 21510 / WK1), this protein is Probable tRNA sulfurtransferase.